The chain runs to 89 residues: UPF0147 protein STK_04605 (89 aa).

It belongs to the UPF0147 family.

This is UPF0147 protein STK_04605 from Sulfurisphaera tokodaii (strain DSM 16993 / JCM 10545 / NBRC 100140 / 7) (Sulfolobus tokodaii).